The chain runs to 400 residues: Cytohesin-3 (400 aa).

Residues 14–61 adopt a coiled-coil conformation; the sequence is EDLSLEEREELLDIRRRKKELIDDIERLKYEIAEVMTEIDNLTSVEES. Residues 77-206 form the SEC7 domain; that stretch reads FNMDPKKGIQ…IIMLNTSLHN (130 aa). Positions 264–381 constitute a PH domain; the sequence is NPDREGWLLK…WMKSIKASIS (118 aa). A 1,2-diacyl-sn-glycero-3-phospho-(1D-myo-inositol-3,4,5-trisphosphate) contacts are provided by residues 273 to 281, Arg-285, Tyr-296, Arg-306, and Asn-355; that span reads KLGGGRVKT. The C-terminal autoinhibitory region stretch occupies residues 392-400; the sequence is RKRRIANKK.

Interacts with TAMALIN. Interacts with ARF6. Interacts with FRMD4A. Interacts with FRMD4B. In terms of tissue distribution, almost absent from liver, thymus and peripheral blood lymphocytes.

It localises to the cytoplasm. The protein resides in the cytosol. The protein localises to the cell membrane. Its subcellular location is the cell junction. It is found in the adherens junction. It localises to the tight junction. Promotes guanine-nucleotide exchange on ARF1 and ARF6. Promotes the activation of ARF factors through replacement of GDP with GTP. Plays a role in the epithelial polarization. In Homo sapiens (Human), this protein is Cytohesin-3.